Reading from the N-terminus, the 226-residue chain is Leucyl/phenylalanyl-tRNA--protein transferase (226 aa).

This sequence belongs to the L/F-transferase family.

The protein localises to the cytoplasm. The catalysed reaction is N-terminal L-lysyl-[protein] + L-leucyl-tRNA(Leu) = N-terminal L-leucyl-L-lysyl-[protein] + tRNA(Leu) + H(+). It carries out the reaction N-terminal L-arginyl-[protein] + L-leucyl-tRNA(Leu) = N-terminal L-leucyl-L-arginyl-[protein] + tRNA(Leu) + H(+). The enzyme catalyses L-phenylalanyl-tRNA(Phe) + an N-terminal L-alpha-aminoacyl-[protein] = an N-terminal L-phenylalanyl-L-alpha-aminoacyl-[protein] + tRNA(Phe). Its function is as follows. Functions in the N-end rule pathway of protein degradation where it conjugates Leu, Phe and, less efficiently, Met from aminoacyl-tRNAs to the N-termini of proteins containing an N-terminal arginine or lysine. The chain is Leucyl/phenylalanyl-tRNA--protein transferase from Pseudomonas putida (strain W619).